A 70-amino-acid chain; its full sequence is Putative membrane protein insertion efficiency factor (70 aa).

The protein belongs to the UPF0161 family.

The protein resides in the cell inner membrane. Its function is as follows. Could be involved in insertion of integral membrane proteins into the membrane. This chain is Putative membrane protein insertion efficiency factor, found in Francisella tularensis subsp. tularensis (strain SCHU S4 / Schu 4).